The following is a 292-amino-acid chain: NAD kinase (292 aa).

Asp73 functions as the Proton acceptor in the catalytic mechanism. NAD(+) is bound by residues 73–74 (DG), 147–148 (NE), His158, Arg175, Asp177, 188–193 (TGYSLS), and Gln247.

The protein belongs to the NAD kinase family. A divalent metal cation serves as cofactor.

Its subcellular location is the cytoplasm. It catalyses the reaction NAD(+) + ATP = ADP + NADP(+) + H(+). Involved in the regulation of the intracellular balance of NAD and NADP, and is a key enzyme in the biosynthesis of NADP. Catalyzes specifically the phosphorylation on 2'-hydroxyl of the adenosine moiety of NAD to yield NADP. The protein is NAD kinase of Buchnera aphidicola subsp. Acyrthosiphon pisum (strain 5A).